We begin with the raw amino-acid sequence, 132 residues long: Movement protein TGB3 (132 aa).

Residues 1 to 11 (MVLVVKVDLSN) are Cytoplasmic-facing. The helical transmembrane segment at 12 to 32 (IVLYIVAGCVVVSMLYSPFFS) threads the bilayer. Residues 33-109 (NDVKASSYAG…TETLFIILSR (77 aa)) are Lumenal-facing. Residues 110-130 (LFGLAVFLFMICLMSIVWFWC) traverse the membrane as a helical segment. Over 131 to 132 (HR) the chain is Cytoplasmic.

This sequence belongs to the benyvirus TGB3 movement protein family. Interacts with movement proteins TGB1 and TGB2.

It localises to the host cell junction. It is found in the host plasmodesma. The protein localises to the host endoplasmic reticulum membrane. Participates in the transport of viral RNA to the plasmodesmata. TGBp3 most probably contains signals of plasmodesmata targeting is therefore involved in the targeting of TGBp2, and viral RNAs-TGBp1 (RNP complex), to plasmodesmata. Can gate plasmodesmata and increase their size exclusion limit. This is Movement protein TGB3 from Beta macrocarpa (Beet).